We begin with the raw amino-acid sequence, 526 residues long: Glutamate--cysteine ligase (526 aa).

Belongs to the glutamate--cysteine ligase type 1 family. Type 1 subfamily.

It carries out the reaction L-cysteine + L-glutamate + ATP = gamma-L-glutamyl-L-cysteine + ADP + phosphate + H(+). It participates in sulfur metabolism; glutathione biosynthesis; glutathione from L-cysteine and L-glutamate: step 1/2. The protein is Glutamate--cysteine ligase of Proteus mirabilis (strain HI4320).